The primary structure comprises 333 residues: Isopenicillin N synthase (333 aa).

Positions 87, 91, and 191 each coordinate isopenicillin N. N-[(5S)-5-amino-5-carboxypentanoyl]-L-cysteinyl-D-valine contacts are provided by Arg87, Tyr91, Tyr191, His216, and Asp218. The Fe2OG dioxygenase domain maps to 180–290 (DTLSCRSLMI…RLSLPFFLHA (111 aa)). Fe(2+) contacts are provided by His216, Asp218, and His272. Arg281 contacts 2-oxoglutarate. Ser283 serves as a coordination point for isopenicillin N. Position 283 (Ser283) interacts with N-[(5S)-5-amino-5-carboxypentanoyl]-L-cysteinyl-D-valine.

The protein belongs to the iron/ascorbate-dependent oxidoreductase family. The cofactor is Fe cation. Requires L-ascorbate as cofactor.

The enzyme catalyses N-[(5S)-5-amino-5-carboxypentanoyl]-L-cysteinyl-D-valine + O2 = isopenicillin N + 2 H2O. It participates in antibiotic biosynthesis; penicillin G biosynthesis; penicillin G from L-alpha-aminoadipate and L-cysteine and L-valine: step 2/3. In terms of biological role, removes, in the presence of oxygen, 4 hydrogen atoms from delta-L-(alpha-aminoadipyl)-L-cysteinyl-D-valine (ACV) to form the azetidinone and thiazolidine rings of isopenicillin. The polypeptide is Isopenicillin N synthase (pcbC) (Streptomyces microflavus (Streptomyces lipmanii)).